Consider the following 287-residue polypeptide: Glycine--tRNA ligase alpha subunit (287 aa).

This sequence belongs to the class-II aminoacyl-tRNA synthetase family. As to quaternary structure, tetramer of two alpha and two beta subunits.

The protein resides in the cytoplasm. The enzyme catalyses tRNA(Gly) + glycine + ATP = glycyl-tRNA(Gly) + AMP + diphosphate. The protein is Glycine--tRNA ligase alpha subunit of Campylobacter curvus (strain 525.92).